The chain runs to 125 residues: Aspartate 1-decarboxylase (125 aa).

Catalysis depends on serine 25, which acts as the Schiff-base intermediate with substrate; via pyruvic acid. Serine 25 is subject to Pyruvic acid (Ser). Residue threonine 57 coordinates substrate. Residue tyrosine 58 is the Proton donor of the active site. Glycine 73–alanine 75 contributes to the substrate binding site.

Belongs to the PanD family. As to quaternary structure, heterooctamer of four alpha and four beta subunits. Requires pyruvate as cofactor. Is synthesized initially as an inactive proenzyme, which is activated by self-cleavage at a specific serine bond to produce a beta-subunit with a hydroxyl group at its C-terminus and an alpha-subunit with a pyruvoyl group at its N-terminus.

The protein localises to the cytoplasm. The enzyme catalyses L-aspartate + H(+) = beta-alanine + CO2. It participates in cofactor biosynthesis; (R)-pantothenate biosynthesis; beta-alanine from L-aspartate: step 1/1. In terms of biological role, catalyzes the pyruvoyl-dependent decarboxylation of aspartate to produce beta-alanine. The protein is Aspartate 1-decarboxylase of Herpetosiphon aurantiacus (strain ATCC 23779 / DSM 785 / 114-95).